We begin with the raw amino-acid sequence, 611 residues long: Serine protease FAM111A (611 aa).

Positions Lys-16–Val-28 match the PIP-box motif. Lys-20 participates in a covalent cross-link: Glycyl lysine isopeptide (Lys-Gly) (interchain with G-Cter in SUMO2). Ser-26 is modified (phosphoserine). Residues Lys-30 and Lys-65 each participate in a glycyl lysine isopeptide (Lys-Gly) (interchain with G-Cter in SUMO2) cross-link. A disordered region spans residues Glu-44–Pro-73. An interaction with SV40 large T antigen region spans residues Lys-336 to Leu-611. Catalysis depends on charge relay system residues His-385, Asp-439, and Ser-541.

The protein belongs to the FAM111 family. Interacts (via PIP-box) with PCNA; then interaction is direct. As to quaternary structure, (Microbial infection) Interacts with SV40 virus large T antigen and this interaction is required for efficient viral replication and sustained viral gene expression in restrictive cell types. In terms of assembly, (Microbial infection) Interacts with vaccinia virus protein OPG079; this interaction promotes the degradation of OPG079. Post-translationally, autocatalytically cleaved; activating the protein. Autocatalytic cleavage takes place in trans.

Its subcellular location is the nucleus. The protein resides in the chromosome. It is found in the cytoplasm. Single-stranded DNA-binding serine protease that mediates the proteolytic cleavage of covalent DNA-protein cross-links (DPCs) during DNA synthesis, thereby playing a key role in maintaining genomic integrity. DPCs are highly toxic DNA lesions that interfere with essential chromatin transactions, such as replication and transcription, and which are induced by reactive agents, such as UV light or formaldehyde. Protects replication fork from stalling by removing DPCs, such as covalently trapped topoisomerase 1 (TOP1) adducts on DNA lesion, or poly(ADP-ribose) polymerase 1 (PARP1)-DNA complexes trapped by PARP inhibitors. Required for PCNA loading on replication sites. Promotes S-phase entry and DNA synthesis. Also acts as a restriction factor for some viruses including SV40 polyomavirus and vaccinia virus. Mechanistically, affects nuclear barrier function during viral replication by mediating the disruption of the nuclear pore complex (NPC) via its protease activity. In turn, interacts with vaccinia virus DNA-binding protein OPG079 in the cytoplasm and promotes its degradation without the need of its protease activity but through autophagy. This is Serine protease FAM111A from Homo sapiens (Human).